Consider the following 696-residue polypeptide: Glycine--tRNA ligase beta subunit (696 aa).

Belongs to the class-II aminoacyl-tRNA synthetase family. Tetramer of two alpha and two beta subunits.

The protein localises to the cytoplasm. It carries out the reaction tRNA(Gly) + glycine + ATP = glycyl-tRNA(Gly) + AMP + diphosphate. This chain is Glycine--tRNA ligase beta subunit, found in Methylorubrum extorquens (strain CM4 / NCIMB 13688) (Methylobacterium extorquens).